A 245-amino-acid polypeptide reads, in one-letter code: tRNA pseudouridine synthase A (245 aa).

Aspartate 52 acts as the Nucleophile in catalysis. Tyrosine 111 contacts substrate.

This sequence belongs to the tRNA pseudouridine synthase TruA family. In terms of assembly, homodimer.

It catalyses the reaction uridine(38/39/40) in tRNA = pseudouridine(38/39/40) in tRNA. Its function is as follows. Formation of pseudouridine at positions 38, 39 and 40 in the anticodon stem and loop of transfer RNAs. The protein is tRNA pseudouridine synthase A of Thermotoga sp. (strain RQ2).